The sequence spans 473 residues: Photosystem II CP43 reaction center protein (473 aa).

Positions 1 to 14 (MKILYSLRRFYHVE) are excised as a propeptide. Thr-15 is subject to N-acetylthreonine. Thr-15 carries the phosphothreonine modification. 5 helical membrane-spanning segments follow: residues 69-93 (LFEVAHFVPEKPMYEQGLILLPHLA), 134-155 (LLGPETLEESFPFFGYVWKDRN), 178-200 (KALYFGGIYDTWAPGGGDVRKIT), 255-275 (KPFAWARRAFVWSGEAYLSYS), and 291-312 (WFNNTAYPSEFYGPTGPEASQA). Glu-367 is a binding site for [CaMn4O5] cluster. Residues 447-471 (RARAAAAGFEKGIDRDLEPVLYMTP) traverse the membrane as a helical segment.

The protein belongs to the PsbB/PsbC family. PsbC subfamily. PSII is composed of 1 copy each of membrane proteins PsbA, PsbB, PsbC, PsbD, PsbE, PsbF, PsbH, PsbI, PsbJ, PsbK, PsbL, PsbM, PsbT, PsbX, PsbY, PsbZ, Psb30/Ycf12, at least 3 peripheral proteins of the oxygen-evolving complex and a large number of cofactors. It forms dimeric complexes. Binds multiple chlorophylls and provides some of the ligands for the Ca-4Mn-5O cluster of the oxygen-evolving complex. It may also provide a ligand for a Cl- that is required for oxygen evolution. PSII binds additional chlorophylls, carotenoids and specific lipids. is required as a cofactor.

It localises to the plastid. Its subcellular location is the chloroplast thylakoid membrane. One of the components of the core complex of photosystem II (PSII). It binds chlorophyll and helps catalyze the primary light-induced photochemical processes of PSII. PSII is a light-driven water:plastoquinone oxidoreductase, using light energy to abstract electrons from H(2)O, generating O(2) and a proton gradient subsequently used for ATP formation. This Oryza nivara (Indian wild rice) protein is Photosystem II CP43 reaction center protein.